The sequence spans 1276 residues: Component of gems protein 5 (1276 aa).

The segment at 53–55 (NWY) is interaction with U4 snRNA. WD repeat units follow at residues 92–139 (GHTD…DDHN), 183–223 (EHKA…VFPI), 228–268 (GNNI…TVCK), 271–336 (AHSA…IESG), 364–405 (NDKQ…SPPE), 438–481 (TTKN…IKIQ), 485–522 (GFVYSIDTCSYSPNTFAIGCGDNTIRLWSPTENSKDAY), and 530–574 (GIQS…SKIF). The disordered stretch occupies residues 138-157 (HNEDTEIGDDFKHGSGGGGS). Residues 586–652 (IWKPPPTPTP…NSNNEQQPNK (67 aa)) form a disordered region. Over residues 598-646 (NINNNNNNNNNNNNNNNNNNNNNNNNNNNNNNNNNNNNINNNNNNNSNN) the composition is skewed to low complexity. WD repeat units follow at residues 688 to 727 (TFSKHKTDINFNLNGDMISIGYSDGTIDIFTSEFLFLTRI) and 729 to 771 (EHKK…NQNE). Residues 772–793 (NEKKIDNEKGKENENEKGKENE) show a composition bias toward basic and acidic residues. The disordered stretch occupies residues 772–809 (NEKKIDNEKGKENENEKGKENENENENENENENENENE). The stretch at 778–829 (NEKGKENENEKGKENENENENENENENENENENEIENIVNNNNENDTEIEIK) forms a coiled coil. Residues 794–809 (NENENENENENENENE) show a composition bias toward acidic residues. WD repeat units lie at residues 863-903 (GHKN…AISN) and 906-946 (GHDG…FKTV). Positions 967–997 (ITEQQQQQQQPQSPIKSNPDQSNNPSLVPPI) are disordered. Over residues 979-992 (SPIKSNPDQSNNPS) the composition is skewed to polar residues.

This sequence belongs to the WD repeat gemin-5 family. Part of the core SMN complex.

It is found in the nucleus. It localises to the nucleoplasm. The protein localises to the gem. The protein resides in the cytoplasm. Functionally, the SMN complex catalyzes the assembly of small nuclear ribonucleoproteins (snRNPs), the building blocks of the spliceosome, and thereby plays an important role in the splicing of cellular pre-mRNAs. Most spliceosomal snRNPs contain a common set of Sm proteins SNRPB, SNRPD1, SNRPD2, SNRPD3, SNRPE, SNRPF and SNRPG that assemble in a heptameric protein ring on the Sm site of the small nuclear RNA to form the core snRNP (Sm core). In the cytosol, the Sm proteins SNRPD1, SNRPD2, SNRPE, SNRPF and SNRPG are trapped in an inactive 6S pICln-Sm complex by the chaperone CLNS1A that controls the assembly of the core snRNP. To assemble core snRNPs, the SMN complex accepts the trapped 5Sm proteins from CLNS1A forming an intermediate. Binding of snRNA inside 5Sm ultimately triggers eviction of the SMN complex, thereby allowing binding of SNRPD3 and SNRPB to complete assembly of the core snRNP. Within the SMN complex, GEMIN5 recognizes and delivers the small nuclear RNAs (snRNAs) to the SMN complex. Binds to the 7-methylguanosine cap of RNA molecules. The protein is Component of gems protein 5 (gemin5) of Dictyostelium discoideum (Social amoeba).